Reading from the N-terminus, the 487-residue chain is Acetylcholine receptor subunit beta-type acr-3 (487 aa).

Residues Met-1–Cys-20 form the signal peptide. Residues Tyr-21–Thr-231 are Extracellular-facing. Residue Asn-46 is glycosylated (N-linked (GlcNAc...) asparagine). Cys-151 and Cys-165 are oxidised to a cystine. Transmembrane regions (helical) follow at residues Val-232 to Pro-252, Ile-259 to Ile-279, and Leu-294 to Val-314. The Cytoplasmic portion of the chain corresponds to Tyr-315 to Arg-439. The disordered stretch occupies residues Ile-380–Ser-400. A helical membrane pass occupies residues Leu-440–Ala-460.

This sequence belongs to the ligand-gated ion channel (TC 1.A.9) family. Acetylcholine receptor (TC 1.A.9.1) subfamily. In terms of assembly, component of nicotinic acetylcholine receptor. In cholinergic motoneurons, composed of 2 non-alpha subunits acr-2 and acr-3, and 3 alpha subunits unc-38, unc-63 and acr-12.

It is found in the postsynaptic cell membrane. Its subcellular location is the cell membrane. Its function is as follows. Non-alpha subunit of nicotinic acetylcholine receptor (nAChR). Probably acts in cholinergic motoneurons to regulate presynaptic neurotransmitter release, thereby ensuring normal level of excitation of cholinergic motoneurons during locomotion. The polypeptide is Acetylcholine receptor subunit beta-type acr-3 (acr-3) (Caenorhabditis elegans).